We begin with the raw amino-acid sequence, 689 residues long: Armadillo-like helical domain-containing protein 3 (689 aa).

Residues 520-538 traverse the membrane as a helical segment; that stretch reads IFQLALQVVNLFNMFITYG.

This sequence belongs to the ARMH3 family.

It is found in the golgi apparatus membrane. Its subcellular location is the cytoplasm. May be involved in Golgi maintenance and protein secretion. This chain is Armadillo-like helical domain-containing protein 3, found in Danio rerio (Zebrafish).